The chain runs to 77 residues: MSRVCQVTGKGPVTGNNISHANNKTRRRFLPNLQHHRFWVEEEKRFVRLRVSAKGMRIIDKRGITVVLAEIRAAGKI.

Positions 1–20 (MSRVCQVTGKGPVTGNNISH) are disordered.

It belongs to the bacterial ribosomal protein bL28 family.

The sequence is that of Large ribosomal subunit protein bL28 from Pseudomonas fluorescens (strain SBW25).